Reading from the N-terminus, the 447-residue chain is Putative branched-chain amino acid carrier protein SH1502 (447 aa).

13 helical membrane-spanning segments follow: residues 6–26 (WIVG…IFPP), 40–60 (VIAF…VGAL), 74–94 (PKFS…LFAI), 116–136 (LVLF…CINP), 143–163 (IGSL…IKGF), 193–213 (GYLT…VNAI), 229–249 (VMSG…LGFI), 270–287 (VGAY…GVFG), 290–310 (LLGI…IVSV), 328–348 (IFFT…VISM), 350–370 (VPVL…ILLA), 382–402 (IPIA…NGWV), and 417–437 (LEWF…AKFV).

This sequence belongs to the branched chain amino acid transporter family.

It localises to the cell membrane. Functionally, component of the transport system for branched-chain amino acids (leucine, isoleucine and valine), which is coupled to a proton motive force. In Staphylococcus haemolyticus (strain JCSC1435), this protein is Putative branched-chain amino acid carrier protein SH1502.